We begin with the raw amino-acid sequence, 148 residues long: UPF0178 protein Pcar_2632 (148 aa).

It belongs to the UPF0178 family.

The chain is UPF0178 protein Pcar_2632 from Syntrophotalea carbinolica (strain DSM 2380 / NBRC 103641 / GraBd1) (Pelobacter carbinolicus).